Reading from the N-terminus, the 200-residue chain is MSIKTLTLYNFNTSYSFGKEEKKEKEQSLTSKLARLKDSYEKEGLRKAVEGIIIIHDHGHPHILLLQDNNYFKLPGGKLKPGENEIDGLIRKLTKKLSPTGTPVSDAPWEIGDHVSTWWRPNFEPSLFPYIPSHITKPKECKKLFVVTLPEKCKFAVSNNLSLIAVSLYEIYNNSQRYGAVISSIPALISRYTFVYLNVD.

The Nudix hydrolase domain maps to 45-170 (LRKAVEGIII…LSLIAVSLYE (126 aa)). The interaction with RNA stretch occupies residues 70-72 (NYF). A Nudix box motif is present at residues 77–98 (GKLKPGENEIDGLIRKLTKKLS).

Belongs to the Nudix hydrolase family. CPSF5 subfamily. In terms of assembly, homodimer (via N- and C-terminus); binds RNA as homodimer. Component of the cleavage factor Im (CFIm) complex.

The protein resides in the nucleus. It localises to the cytoplasm. Component of the cleavage factor Im (CFIm) complex that functions as an activator of the pre-mRNA 3'-end cleavage and polyadenylation processing required for the maturation of pre-mRNA into functional mRNAs. CFIm contributes to the recruitment of multiprotein complexes on specific sequences on the pre-mRNA 3'-end, so called cleavage and polyadenylation signals (pA signals). Most pre-mRNAs contain multiple pA signals, resulting in alternative cleavage and polyadenylation (APA) producing mRNAs with variable 3'-end formation. The CFIm complex acts as a key regulator of cleavage and polyadenylation site choice during APA through its binding to 5'-UGUA-3' elements localized in the 3'-untranslated region (UTR) for a huge number of pre-mRNAs. Binds to 5'-UGUA-3' elements localized upstream of pA signals that act as enhancers of pre-mRNA 3'-end processing. The homodimer mediates simultaneous sequence-specific recognition of two 5'-UGUA-3' elements within the pre-mRNA. Plays a role in somatic cell fate transitions and pluripotency by regulating widespread changes in gene expression through an APA-dependent function. Binds to chromatin. The polypeptide is Cleavage and polyadenylation specificity factor subunit 5 (Dictyostelium discoideum (Social amoeba)).